The sequence spans 157 residues: Mediator of RNA polymerase II transcription subunit 10 (157 aa).

The protein belongs to the Mediator complex subunit 10 family. As to quaternary structure, component of the Mediator complex, which is composed of at least 21 subunits that form three structurally distinct submodules. The Mediator head module contains MED6, MED8, MED11, SRB4/MED17, SRB5/MED18, ROX3/MED19, SRB2/MED20 and SRB6/MED22, the middle module contains MED1, MED4, NUT1/MED5, MED7, CSE2/MED9, NUT2/MED10, SRB7/MED21 and SOH1/MED31, and the tail module contains MED2, PGD1/MED3, RGR1/MED14, GAL11/MED15 and SIN4/MED16. The head and the middle modules interact directly with RNA polymerase II, whereas the elongated tail module interacts with gene-specific regulatory proteins. NUT2/MED10 interacts directly with SRB7/MED21.

Its subcellular location is the nucleus. Its function is as follows. Component of the Mediator complex, a coactivator involved in the regulated transcription of nearly all RNA polymerase II-dependent genes. Mediator functions as a bridge to convey information from gene-specific regulatory proteins to the basal RNA polymerase II transcription machinery. The Mediator complex, having a compact conformation in its free form, is recruited to promoters by direct interactions with regulatory proteins and serves for the assembly of a functional preinitiation complex with RNA polymerase II and the general transcription factors. The Mediator complex unfolds to an extended conformation and partially surrounds RNA polymerase II, specifically interacting with the unphosphorylated form of the C-terminal domain (CTD) of RNA polymerase II. The Mediator complex dissociates from the RNA polymerase II holoenzyme and stays at the promoter when transcriptional elongation begins. This is Mediator of RNA polymerase II transcription subunit 10 (NUT2) from Saccharomyces cerevisiae (strain ATCC 204508 / S288c) (Baker's yeast).